The chain runs to 318 residues: Homoserine kinase (318 aa).

Position 97–107 (97–107) interacts with ATP; sequence PIGSGLGSSAC.

It belongs to the GHMP kinase family. Homoserine kinase subfamily.

The protein resides in the cytoplasm. It carries out the reaction L-homoserine + ATP = O-phospho-L-homoserine + ADP + H(+). It participates in amino-acid biosynthesis; L-threonine biosynthesis; L-threonine from L-aspartate: step 4/5. Catalyzes the ATP-dependent phosphorylation of L-homoserine to L-homoserine phosphate. This is Homoserine kinase from Vibrio vulnificus (strain CMCP6).